The chain runs to 824 residues: Glycerol-3-phosphate acyltransferase (824 aa).

The HXXXXD motif motif lies at cysteine 302–methionine 307.

Belongs to the GPAT/DAPAT family.

The protein resides in the cell inner membrane. The catalysed reaction is sn-glycerol 3-phosphate + an acyl-CoA = a 1-acyl-sn-glycero-3-phosphate + CoA. Its pathway is phospholipid metabolism; CDP-diacylglycerol biosynthesis; CDP-diacylglycerol from sn-glycerol 3-phosphate: step 1/3. The protein is Glycerol-3-phosphate acyltransferase of Actinobacillus pleuropneumoniae serotype 5b (strain L20).